Here is a 404-residue protein sequence, read N- to C-terminus: MRNINVQLNPLSDIEKLQVELVERKGLGHPDYIADAVAEEASRKLSLYYLKKYGVILHHNLDKTLVVGGQATPRFKGGDVIQPIYIVVAGRATTEVKTESGIEQIPVGTIIIESVKEWIRNNFRYLDAEKHLIVDYKIGKGSTDLVGIFEAGKRVPLSNDTSFGVGFAPFTKLEKLVYETERHLNSKQFKAKLPEVGEDIKVMGLRRGNEVDLTIAMATISELIEDVNHYINVKEQAKNKILDLASKIAPDYDVRIYVNTGDKIDKNILYLTVTGTSAEHGDDGMTGRGNRGVGLITPMRPMSLEATAGKNPVNHVGKLYNVLANLIANKIAQEVKDVKFSQVQVLGQIGRPIDDPLIANVDVITYDGKLNDETKNEISGIVDEMLSSFNKLTELILEGKATLF.

139–144 (GKGSTD) provides a ligand contact to ATP.

The protein belongs to the AdoMet synthase 2 family. Mg(2+) serves as cofactor.

The enzyme catalyses L-methionine + ATP + H2O = S-adenosyl-L-methionine + phosphate + diphosphate. Its pathway is amino-acid biosynthesis; S-adenosyl-L-methionine biosynthesis; S-adenosyl-L-methionine from L-methionine: step 1/1. Functionally, catalyzes the formation of S-adenosylmethionine from methionine and ATP. This Saccharolobus islandicus (strain Y.N.15.51 / Yellowstone #2) (Sulfolobus islandicus) protein is S-adenosylmethionine synthase.